A 607-amino-acid polypeptide reads, in one-letter code: Serum albumin (607 aa).

Positions 1–16 are cleaved as a signal peptide; sequence MKWTILTALLIISAES. A propeptide spanning residues 17-20 is cleaved from the precursor; the sequence is KNLY. Albumin domains are found at residues 19 to 209, 210 to 401, and 403 to 600; these read LYKR…TQLK, KALH…HVLA, and AIKE…ILIE. His27 serves as a coordination point for Cu cation. Intrachain disulfides connect Cys77–Cys86, Cys99–Cys115, Cys114–Cys125, Cys147–Cys192, Cys191–Cys200, Cys223–Cys269, Cys268–Cys276, Cys288–Cys302, Cys301–Cys312, Cys339–Cys384, Cys383–Cys392, Cys415–Cys461, Cys460–Cys471, Cys484–Cys500, Cys499–Cys510, Cys537–Cys582, and Cys581–Cys590. Zn(2+) contacts are provided by His270 and Asp272. Residues Asp272 and Glu275 each contribute to the Ca(2+) site.

This sequence belongs to the ALB/AFP/VDB family. As to expression, plasma. In the skin, widely distributed around the membranes of epithelial layer cells and within the stratum spongiosum of the dermis (at protein level).

It localises to the secreted. In terms of biological role, serum albumin, the main protein of plasma, has a good binding capacity for water, Ca(2+), Na(+), K(+), fatty acids, hormones, bilirubin and drugs. Its main function is the regulation of the colloidal osmotic pressure of blood. Potent inhibitor of trypsin but has no inhibitory effect on thrombin, chymotrypsin, elastase and subtilisin. This is Serum albumin from Bombina maxima (Giant fire-bellied toad).